We begin with the raw amino-acid sequence, 311 residues long: Aspartate carbamoyltransferase catalytic subunit (311 aa).

Arginine 55 and threonine 56 together coordinate carbamoyl phosphate. Residue lysine 85 coordinates L-aspartate. Carbamoyl phosphate-binding residues include arginine 106, histidine 135, and glutamine 138. L-aspartate is bound by residues arginine 168 and arginine 230. The carbamoyl phosphate site is built by leucine 268 and proline 269.

It belongs to the aspartate/ornithine carbamoyltransferase superfamily. ATCase family. In terms of assembly, heterododecamer (2C3:3R2) of six catalytic PyrB chains organized as two trimers (C3), and six regulatory PyrI chains organized as three dimers (R2).

The enzyme catalyses carbamoyl phosphate + L-aspartate = N-carbamoyl-L-aspartate + phosphate + H(+). The protein operates within pyrimidine metabolism; UMP biosynthesis via de novo pathway; (S)-dihydroorotate from bicarbonate: step 2/3. In terms of biological role, catalyzes the condensation of carbamoyl phosphate and aspartate to form carbamoyl aspartate and inorganic phosphate, the committed step in the de novo pyrimidine nucleotide biosynthesis pathway. The sequence is that of Aspartate carbamoyltransferase catalytic subunit from Salmonella arizonae (strain ATCC BAA-731 / CDC346-86 / RSK2980).